We begin with the raw amino-acid sequence, 114 residues long: Vacuolar morphogenesis protein 10 (114 aa).

It is found in the vacuole membrane. Required for vacuolar fusion. Involved in the early steps of the fusion pathway. The chain is Vacuolar morphogenesis protein 10 (VAM10) from Saccharomyces cerevisiae (strain ATCC 204508 / S288c) (Baker's yeast).